The primary structure comprises 1256 residues: Centrosome and spindle pole-associated protein 1 (1256 aa).

Coiled-coil stretches lie at residues 38-62 (ADNL…LESD) and 114-135 (EDYE…RRYL). Over residues 189–208 (GKEESSEKFRQVEKSTEPKS) the composition is skewed to basic and acidic residues. 2 disordered regions span residues 189–244 (GKEE…LTPS) and 381–403 (AENK…CSPF). Positions 222–232 (LTSQIQTSCEN) are enriched in polar residues. At serine 244 the chain carries Phosphoserine. Residues 244 to 270 (SEAYEELLNQRRLEEDRYRQLDDEIEL) are a coiled coil. Residues 417 to 449 (QRRKEKYRLELLEQMAEQQRNKRREKDLELRVA) are a coiled coil. 2 positions are modified to phosphoserine: serine 459 and serine 527. Residues 625 to 669 (SKQSLQSYQEALQQQIREREERRKKEREEKEEYEAKLEAEMRTYN) adopt a coiled-coil conformation. Disordered regions lie at residues 735–757 (ANKS…VFGE) and 813–853 (EYEE…KKEE). A compositionally biased stretch (polar residues) spans 736 to 748 (NKSSGHMQTQSSP). 2 positions are modified to phosphoserine: serine 901 and serine 920. The disordered stretch occupies residues 913–932 (SSMSRAQSPPVPARKNQLRA). Residues 925–964 (ARKNQLRAEEEKKNVIMELSEMRKQLRSEERRLQERLLHM) are a coiled coil. A Phosphoserine modification is found at serine 966. 2 disordered regions span residues 1114–1147 (EDDV…RPNV) and 1232–1256 (LNQE…TAHG). Residues 1246–1256 (FTWQGLSTAHG) are compositionally biased toward polar residues.

As to quaternary structure, interacts with PLEKHG6. Interacts with ARMC9, TOGARAM1, CCDC66, CEP104 and CEP290. Post-translationally, phosphorylated. Phosphorylation increases in colcemide-treated cells. In terms of tissue distribution, expressed in adult and fetal brain with enrichment in the cerebellum. Detected in testis.

It is found in the cytoplasm. The protein resides in the cytoskeleton. Its subcellular location is the microtubule organizing center. The protein localises to the centrosome. It localises to the spindle. It is found in the spindle pole. The protein resides in the cell projection. Its subcellular location is the cilium. May play a role in cell-cycle-dependent microtubule organization. In Homo sapiens (Human), this protein is Centrosome and spindle pole-associated protein 1 (CSPP1).